A 354-amino-acid polypeptide reads, in one-letter code: UDP-N-acetylglucosamine--N-acetylmuramyl-(pentapeptide) pyrophosphoryl-undecaprenol N-acetylglucosamine transferase 3 (354 aa).

UDP-N-acetyl-alpha-D-glucosamine is bound by residues 12–14 (TAG), arginine 163, serine 193, and glutamine 287.

This sequence belongs to the glycosyltransferase 28 family. MurG subfamily.

It localises to the cell membrane. It carries out the reaction di-trans,octa-cis-undecaprenyl diphospho-N-acetyl-alpha-D-muramoyl-L-alanyl-D-glutamyl-meso-2,6-diaminopimeloyl-D-alanyl-D-alanine + UDP-N-acetyl-alpha-D-glucosamine = di-trans,octa-cis-undecaprenyl diphospho-[N-acetyl-alpha-D-glucosaminyl-(1-&gt;4)]-N-acetyl-alpha-D-muramoyl-L-alanyl-D-glutamyl-meso-2,6-diaminopimeloyl-D-alanyl-D-alanine + UDP + H(+). It functions in the pathway cell wall biogenesis; peptidoglycan biosynthesis. Its function is as follows. Cell wall formation. Catalyzes the transfer of a GlcNAc subunit on undecaprenyl-pyrophosphoryl-MurNAc-pentapeptide (lipid intermediate I) to form undecaprenyl-pyrophosphoryl-MurNAc-(pentapeptide)GlcNAc (lipid intermediate II). This is UDP-N-acetylglucosamine--N-acetylmuramyl-(pentapeptide) pyrophosphoryl-undecaprenol N-acetylglucosamine transferase 3 from Bacillus cereus (strain ATCC 14579 / DSM 31 / CCUG 7414 / JCM 2152 / NBRC 15305 / NCIMB 9373 / NCTC 2599 / NRRL B-3711).